Reading from the N-terminus, the 176-residue chain is Pectinesterase inhibitor 1 (176 aa).

The N-terminal stretch at 1–25 (MAANLRNNAFLSSLMFLLLIGSSYA) is a signal peptide. Cystine bridges form between Cys35-Cys44 and Cys98-Cys138. N-linked (GlcNAc...) asparagine glycosylation is present at Asn154.

This sequence belongs to the PMEI family. Monomer and homodimer. Interacts in vitro with PPME1. As to expression, highest expression in flowers. Expressed exclusively at the pollen tube tip.

It localises to the secreted. The protein resides in the extracellular space. Its subcellular location is the apoplast. In terms of biological role, inhibits pectin methylesterase (PME) from flowers and siliques. Inhibits PME from leaves. This chain is Pectinesterase inhibitor 1, found in Arabidopsis thaliana (Mouse-ear cress).